Reading from the N-terminus, the 396-residue chain is ATP-dependent RNA helicase eIF4A (396 aa).

A Q motif motif is present at residues 22-50; it reads YSFDDLNLKPNIVRGIFGYGYESPSAIQQ. Residues 53–223 enclose the Helicase ATP-binding domain; the sequence is ILPITEGRDV…TKFMNNPVRI (171 aa). 66–73 serves as a coordination point for ATP; that stretch reads AQSGTGKT. The DEAD box signature appears at 171–174; it reads DEAD. In terms of domain architecture, Helicase C-terminal spans 234–395; the sequence is GIKQFYINVE…EMPANIGELF (162 aa).

It belongs to the DEAD box helicase family. eIF4A subfamily. Component of the eIF4F complex, which composition varies with external and internal environmental conditions. It is composed of at least eIF4A, eIF4E and eIF4G.

The protein localises to the cytoplasm. The enzyme catalyses ATP + H2O = ADP + phosphate + H(+). In terms of biological role, ATP-dependent RNA helicase which is a subunit of the eIF4F complex involved in cap recognition and is required for mRNA binding to ribosome. In the current model of translation initiation, eIF4A unwinds RNA secondary structures in the 5'-UTR of mRNAs which is necessary to allow efficient binding of the small ribosomal subunit, and subsequent scanning for the initiator codon. This Meyerozyma guilliermondii (strain ATCC 6260 / CBS 566 / DSM 6381 / JCM 1539 / NBRC 10279 / NRRL Y-324) (Yeast) protein is ATP-dependent RNA helicase eIF4A (TIF1).